A 273-amino-acid polypeptide reads, in one-letter code: Histone H1.2 (273 aa).

Residues 1 to 63 form a disordered region; that stretch reads MSIEEENVPT…TKKKTTSSHP (63 aa). The residue at position 2 (S2) is an N-acetylserine. S14 carries the phosphoserine modification. The segment covering 33–59 has biased composition (basic residues); it reads GKSKKTTTAKATKKPVKAAAPTKKKTT. The region spanning 61–130 is the H15 domain; the sequence is SHPTYEEMIK…KVKASFKIPS (70 aa). Glycyl lysine isopeptide (Lys-Gly) (interchain with G-Cter in ubiquitin) cross-links involve residues K156 and K165. Composition is skewed to low complexity over residues 193-216 and 237-256; these read KVTA…VAAK and KKVA…PAKS. A disordered region spans residues 193–273; that stretch reads KVTAAKPKSK…KRASTRKAKK (81 aa). Basic residues predominate over residues 257–273; sequence VKVKSPAKRASTRKAKK.

This sequence belongs to the histone H1/H5 family.

The protein resides in the nucleus. The protein localises to the chromosome. Histones H1 are necessary for the condensation of nucleosome chains into higher-order structures. The sequence is that of Histone H1.2 from Arabidopsis thaliana (Mouse-ear cress).